Reading from the N-terminus, the 460-residue chain is Diguanylate cyclase DosC (460 aa).

H98 provides a ligand contact to heme. The region spanning 325-458 is the GGDEF domain; sequence TPLSVLIIDV…GRNRVELWKA (134 aa). Residue D333 coordinates Mg(2+). Substrate contacts are provided by N341 and D350. D376 is a binding site for Mg(2+). Catalysis depends on D376, which acts as the Proton acceptor.

Heme serves as cofactor. Requires Mg(2+) as cofactor.

The enzyme catalyses 2 GTP = 3',3'-c-di-GMP + 2 diphosphate. The protein operates within purine metabolism; 3',5'-cyclic di-GMP biosynthesis. Functionally, globin-coupled heme-based oxygen sensor protein displaying diguanylate cyclase (DGC) activity in response to oxygen availability. Thus, catalyzes the synthesis of cyclic diguanylate (c-di-GMP) via the condensation of 2 GTP molecules. Cyclic-di-GMP is a second messenger which controls cell surface-associated traits in bacteria. This Shigella boydii serotype 4 (strain Sb227) protein is Diguanylate cyclase DosC (dosC).